The chain runs to 580 residues: Adenine deaminase (580 aa).

The protein belongs to the metallo-dependent hydrolases superfamily. Adenine deaminase family. Mn(2+) serves as cofactor.

It catalyses the reaction adenine + H2O + H(+) = hypoxanthine + NH4(+). This Listeria monocytogenes serovar 1/2a (strain ATCC BAA-679 / EGD-e) protein is Adenine deaminase.